The following is a 184-amino-acid chain: MTTIVSVRRNNKVVIAGDGQVSLGNTVMKGNARKVRRLYNNKVLAGFAGGTADAFTLFERFESKLQMHQGHLTKAAVELAKDWRSDRALRKLEALLAVADETASLIITGNGDVVQPENDLIAIGSGGAYAQAAATALLENTELDAREIAEKALNIAGDICVFTNHNHTIEELEIPAELPNLSQA.

Thr2 is a catalytic residue. Na(+) is bound by residues Gly157, Cys160, and Thr163.

Belongs to the peptidase T1B family. HslV subfamily. In terms of assembly, a double ring-shaped homohexamer of HslV is capped on each side by a ring-shaped HslU homohexamer. The assembly of the HslU/HslV complex is dependent on binding of ATP.

The protein resides in the cytoplasm. The enzyme catalyses ATP-dependent cleavage of peptide bonds with broad specificity.. Allosterically activated by HslU binding. Functionally, protease subunit of a proteasome-like degradation complex believed to be a general protein degrading machinery. The sequence is that of ATP-dependent protease subunit HslV from Vibrio vulnificus (strain CMCP6).